A 65-amino-acid polypeptide reads, in one-letter code: Large ribosomal subunit protein bL35 (65 aa).

This sequence belongs to the bacterial ribosomal protein bL35 family.

The polypeptide is Large ribosomal subunit protein bL35 (Thermus thermophilus (strain ATCC BAA-163 / DSM 7039 / HB27)).